A 567-amino-acid polypeptide reads, in one-letter code: Urease subunit alpha (567 aa).

The 439-residue stretch at 129 to 567 folds into the Urease domain; the sequence is GGIDSHIHFI…LPMAQRYFLF (439 aa). Positions 134, 136, and 217 each coordinate Ni(2+). K217 is subject to N6-carboxylysine. H219 provides a ligand contact to substrate. 2 residues coordinate Ni(2+): H246 and H272. H320 functions as the Proton donor in the catalytic mechanism. D360 provides a ligand contact to Ni(2+).

It belongs to the metallo-dependent hydrolases superfamily. Urease alpha subunit family. As to quaternary structure, heterotrimer of UreA (gamma), UreB (beta) and UreC (alpha) subunits. Three heterotrimers associate to form the active enzyme. It depends on Ni cation as a cofactor. Carboxylation allows a single lysine to coordinate two nickel ions.

The protein resides in the cytoplasm. It catalyses the reaction urea + 2 H2O + H(+) = hydrogencarbonate + 2 NH4(+). It participates in nitrogen metabolism; urea degradation; CO(2) and NH(3) from urea (urease route): step 1/1. The protein is Urease subunit alpha of Tolumonas auensis (strain DSM 9187 / NBRC 110442 / TA 4).